The primary structure comprises 87 residues: Mitochondrial import inner membrane translocase subunit TIM9 (87 aa).

Residues 35–59 (CFSDCVNDFTSSKLTSKEQTCIMRC) carry the Twin CX3C motif motif. Disulfide bonds link C35-C59 and C39-C55.

It belongs to the small Tim family. Heterohexamer; composed of 3 copies of TIM9 and 3 copies of TIM10, named soluble 70 kDa complex. Associates with the TIM22 complex, whose core is composed of TIM22 and TIM54. Interacts with the transmembrane regions of multi-pass transmembrane proteins in transit.

Its subcellular location is the mitochondrion inner membrane. Its function is as follows. Mitochondrial intermembrane chaperone that participates in the import and insertion of multi-pass transmembrane proteins into the mitochondrial inner membrane. Also required for the transfer of beta-barrel precursors from the TOM complex to the sorting and assembly machinery (SAM complex) of the outer membrane. Acts as a chaperone-like protein that protects the hydrophobic precursors from aggregation and guide them through the mitochondrial intermembrane space. In Eremothecium gossypii (strain ATCC 10895 / CBS 109.51 / FGSC 9923 / NRRL Y-1056) (Yeast), this protein is Mitochondrial import inner membrane translocase subunit TIM9 (TIM9).